We begin with the raw amino-acid sequence, 225 residues long: ATP-dependent dethiobiotin synthetase BioD (225 aa).

15-20 contacts ATP; the sequence is EIGKTF. Residue T19 coordinates Mg(2+). K40 is an active-site residue. ATP is bound by residues D57, 118–121, 178–179, and 207–209; these read EGVG, NR, and PHV. Mg(2+) contacts are provided by D57 and E118.

Belongs to the dethiobiotin synthetase family. Homodimer. Mg(2+) serves as cofactor.

The protein localises to the cytoplasm. It catalyses the reaction (7R,8S)-7,8-diammoniononanoate + CO2 + ATP = (4R,5S)-dethiobiotin + ADP + phosphate + 3 H(+). Its pathway is cofactor biosynthesis; biotin biosynthesis; biotin from 7,8-diaminononanoate: step 1/2. Its function is as follows. Catalyzes a mechanistically unusual reaction, the ATP-dependent insertion of CO2 between the N7 and N8 nitrogen atoms of 7,8-diaminopelargonic acid (DAPA, also called 7,8-diammoniononanoate) to form a ureido ring. The chain is ATP-dependent dethiobiotin synthetase BioD from Aromatoleum aromaticum (strain DSM 19018 / LMG 30748 / EbN1) (Azoarcus sp. (strain EbN1)).